The sequence spans 57 residues: Large ribosomal subunit protein bL32 (57 aa).

Basic residues predominate over residues 1–20 (MAVPKKKTSKTKRDQRKANW). Residues 1–21 (MAVPKKKTSKTKRDQRKANWK) are disordered.

The protein belongs to the bacterial ribosomal protein bL32 family.

This chain is Large ribosomal subunit protein bL32, found in Rippkaea orientalis (strain PCC 8801 / RF-1) (Cyanothece sp. (strain PCC 8801)).